The chain runs to 92 residues: Small ribosomal subunit protein uS19 (92 aa).

It belongs to the universal ribosomal protein uS19 family.

Protein S19 forms a complex with S13 that binds strongly to the 16S ribosomal RNA. This Rhodospirillum centenum (strain ATCC 51521 / SW) protein is Small ribosomal subunit protein uS19.